A 283-amino-acid polypeptide reads, in one-letter code: Lipoyl synthase (283 aa).

[4Fe-4S] cluster contacts are provided by cysteine 35, cysteine 40, cysteine 46, cysteine 61, cysteine 65, cysteine 68, and serine 273. Residues 47-262 (FRSRQATFLI…RERALAMGFK (216 aa)) form the Radical SAM core domain.

The protein belongs to the radical SAM superfamily. Lipoyl synthase family. It depends on [4Fe-4S] cluster as a cofactor.

It is found in the cytoplasm. It carries out the reaction [[Fe-S] cluster scaffold protein carrying a second [4Fe-4S](2+) cluster] + N(6)-octanoyl-L-lysyl-[protein] + 2 oxidized [2Fe-2S]-[ferredoxin] + 2 S-adenosyl-L-methionine + 4 H(+) = [[Fe-S] cluster scaffold protein] + N(6)-[(R)-dihydrolipoyl]-L-lysyl-[protein] + 4 Fe(3+) + 2 hydrogen sulfide + 2 5'-deoxyadenosine + 2 L-methionine + 2 reduced [2Fe-2S]-[ferredoxin]. Its pathway is protein modification; protein lipoylation via endogenous pathway; protein N(6)-(lipoyl)lysine from octanoyl-[acyl-carrier-protein]: step 2/2. Functionally, catalyzes the radical-mediated insertion of two sulfur atoms into the C-6 and C-8 positions of the octanoyl moiety bound to the lipoyl domains of lipoate-dependent enzymes, thereby converting the octanoylated domains into lipoylated derivatives. The sequence is that of Lipoyl synthase from Geotalea uraniireducens (strain Rf4) (Geobacter uraniireducens).